The primary structure comprises 235 residues: Ribosomal RNA small subunit methyltransferase G (235 aa).

S-adenosyl-L-methionine contacts are provided by residues Gly-75, Phe-80, 126-127 (AE), and Arg-145.

Belongs to the methyltransferase superfamily. RNA methyltransferase RsmG family.

The protein resides in the cytoplasm. In terms of biological role, specifically methylates the N7 position of a guanine in 16S rRNA. In Carboxydothermus hydrogenoformans (strain ATCC BAA-161 / DSM 6008 / Z-2901), this protein is Ribosomal RNA small subunit methyltransferase G.